Here is a 482-residue protein sequence, read N- to C-terminus: Probable glycine dehydrogenase (decarboxylating) subunit 2 (482 aa).

The residue at position 267 (lysine 267) is an N6-(pyridoxal phosphate)lysine.

Belongs to the GcvP family. C-terminal subunit subfamily. In terms of assembly, the glycine cleavage system is composed of four proteins: P, T, L and H. In this organism, the P 'protein' is a heterodimer of two subunits. It depends on pyridoxal 5'-phosphate as a cofactor.

It carries out the reaction N(6)-[(R)-lipoyl]-L-lysyl-[glycine-cleavage complex H protein] + glycine + H(+) = N(6)-[(R)-S(8)-aminomethyldihydrolipoyl]-L-lysyl-[glycine-cleavage complex H protein] + CO2. Functionally, the glycine cleavage system catalyzes the degradation of glycine. The P protein binds the alpha-amino group of glycine through its pyridoxal phosphate cofactor; CO(2) is released and the remaining methylamine moiety is then transferred to the lipoamide cofactor of the H protein. In Aquifex aeolicus (strain VF5), this protein is Probable glycine dehydrogenase (decarboxylating) subunit 2.